The primary structure comprises 489 residues: MARRNFKVLYVSGEVSPFVRFSALADFMASFPQAVEEEGFEARIMMPKYGTINDRKFRLHDVLRLSDIEVHLKEKTDLLHVKVTALPSSKIQTYFLYNEKYFKRNGLFTDMHSGNDTKVNTEKIIFFNVGVLETLQRLGWKPDIIHCHDWHASLIPLLLRTVYASNEFFKDIKTVLTIHNIYRQGILPFKIFQKLLPEEVCSGLHRQNDEVNMLYTGVEHVDLLTTTSKQYADTIRLDGEETYGLGRILEERKENLHGILNGIDTRQWNPATDKLIKKRYSIERLDGKADNKKALQEEAGLSVDAERPLVGVIAGFDEFQGADLLARSLEKLVALDMQLVICGSGDKVYEKTFRDFAEQYPEQVSLQIEYTDAFMHLAIAGMDILLMPGRIESCGMMQLFAMSYGTIPVVYAGGGIIETIHELQEGIGSGFIFHEYTDDSLVGKLSEALAMYSDEERWPQLVHEAMSKDFAWKSSAEEYDQLYRQLLEP.

Arg-20 lines the ADP-alpha-D-glucose pocket.

It belongs to the glycosyltransferase 1 family. Bacterial/plant glycogen synthase subfamily.

It catalyses the reaction [(1-&gt;4)-alpha-D-glucosyl](n) + ADP-alpha-D-glucose = [(1-&gt;4)-alpha-D-glucosyl](n+1) + ADP + H(+). It participates in glycan biosynthesis; glycogen biosynthesis. Functionally, synthesizes alpha-1,4-glucan chains using ADP-glucose. The sequence is that of Glycogen synthase from Chlorobium phaeobacteroides (strain DSM 266 / SMG 266 / 2430).